The primary structure comprises 365 residues: Nicotinate N-methyltransferase 1 (365 aa).

S-adenosyl-L-methionine is bound at residue aspartate 232.

This sequence belongs to the class I-like SAM-binding methyltransferase superfamily. Cation-independent O-methyltransferase family.

It catalyses the reaction nicotinate + S-adenosyl-L-methionine = N-methylnicotinate + S-adenosyl-L-homocysteine. In terms of biological role, involved in nicotinate detoxification in planta. Catalyzes the conversion of nicotinate to N-methylnicotinate, which is a detoxified form of endogenous nicotinate in planta. In Oryza sativa subsp. japonica (Rice), this protein is Nicotinate N-methyltransferase 1.